The following is a 450-amino-acid chain: tRNA modification GTPase MnmE (450 aa).

Residues arginine 23, glutamate 79, and lysine 118 each coordinate (6S)-5-formyl-5,6,7,8-tetrahydrofolate. The TrmE-type G domain occupies 214 to 374 (GITLILVGKP…LKEHILNKVG (161 aa)). Asparagine 224 lines the K(+) pocket. GTP contacts are provided by residues 224–229 (NAGKSS), 243–249 (TSIAGTT), and 268–271 (DTAG). Serine 228 contacts Mg(2+). K(+)-binding residues include threonine 243, isoleucine 245, and threonine 248. Position 249 (threonine 249) interacts with Mg(2+). Lysine 450 is a (6S)-5-formyl-5,6,7,8-tetrahydrofolate binding site.

Belongs to the TRAFAC class TrmE-Era-EngA-EngB-Septin-like GTPase superfamily. TrmE GTPase family. In terms of assembly, homodimer. Heterotetramer of two MnmE and two MnmG subunits. Requires K(+) as cofactor.

The protein localises to the cytoplasm. Functionally, exhibits a very high intrinsic GTPase hydrolysis rate. Involved in the addition of a carboxymethylaminomethyl (cmnm) group at the wobble position (U34) of certain tRNAs, forming tRNA-cmnm(5)s(2)U34. The polypeptide is tRNA modification GTPase MnmE (Francisella tularensis subsp. holarctica (strain OSU18)).